The following is a 324-amino-acid chain: Glycerol-3-phosphate dehydrogenase [NAD(P)+] (324 aa).

Positions 11, 31, and 107 each coordinate NADPH. K107 and G135 together coordinate sn-glycerol 3-phosphate. A139 provides a ligand contact to NADPH. Residues K190, D245, S255, R256, and N257 each contribute to the sn-glycerol 3-phosphate site. K190 serves as the catalytic Proton acceptor. R256 is an NADPH binding site. The NADPH site is built by V278 and E279.

Belongs to the NAD-dependent glycerol-3-phosphate dehydrogenase family.

It localises to the cytoplasm. The enzyme catalyses sn-glycerol 3-phosphate + NAD(+) = dihydroxyacetone phosphate + NADH + H(+). It carries out the reaction sn-glycerol 3-phosphate + NADP(+) = dihydroxyacetone phosphate + NADPH + H(+). It participates in membrane lipid metabolism; glycerophospholipid metabolism. Catalyzes the reduction of the glycolytic intermediate dihydroxyacetone phosphate (DHAP) to sn-glycerol 3-phosphate (G3P), the key precursor for phospholipid synthesis. The protein is Glycerol-3-phosphate dehydrogenase [NAD(P)+] of Anaplasma phagocytophilum (strain HZ).